Consider the following 220-residue polypeptide: Elongation factor Ts, chloroplastic (220 aa).

It belongs to the EF-Ts family.

It localises to the plastid. The protein resides in the chloroplast. Associates with the EF-Tu.GDP complex and induces the exchange of GDP to GTP. It remains bound to the aminoacyl-tRNA.EF-Tu.GTP complex up to the GTP hydrolysis stage on the ribosome. The chain is Elongation factor Ts, chloroplastic (tsf) from Pyropia yezoensis (Susabi-nori).